Reading from the N-terminus, the 110-residue chain is Chelonianin (110 aa).

At Q1 the chain carries Pyrrolidone carboxylic acid. A BPTI/Kunitz inhibitor domain is found at 8–58 (CRLPPEQGPCKGRIPRYFYNPASRMCESFIYGGCKGNKNNFKTKAECVRAC). 7 cysteine pairs are disulfide-bonded: C8/C58, C17/C41, C33/C54, C67/C92, C76/C97, C80/C93, and C86/C101. Residues 60–105 (PPERPGVCPKTSGPGICLHGCDSDSDCKEGQKCCFDGCGYICLTVA) enclose the WAP domain.

The first domain inhibits trypsin; the second one inhibitis subtilisin. This chain is Chelonianin, found in Caretta caretta (Loggerhead sea turtle).